A 416-amino-acid chain; its full sequence is Enterobactin exporter EntS (416 aa).

Topologically, residues 1 to 21 (MNKQSWLLNLSLLKTHPAFRA) are cytoplasmic. The chain crosses the membrane as a helical span at residues 22 to 42 (VFLARFISIVSLGLLGVAVPV). Topologically, residues 43 to 55 (QIQMMTHSTWQVG) are periplasmic. Residues 56 to 76 (LSVTLTGGAMFVGLMVGGVLA) traverse the membrane as a helical segment. The Cytoplasmic segment spans residues 77–83 (DRYERKK). The helical transmembrane segment at 84–104 (VILLARGTCGIGFIGLCLNAL) threads the bilayer. At 105–109 (LPEPS) the chain is on the periplasmic side. A helical membrane pass occupies residues 110 to 130 (LLAIYLLGLWDGFFASLGVTA). Over 131–156 (LLAATPALVGRENLMQAGAITMLTVR) the chain is Cytoplasmic. The chain crosses the membrane as a helical span at residues 157–177 (LGSVISPMIGGLLLATGGVAW). A topological domain (periplasmic) is located at residue Asn178. A helical transmembrane segment spans residues 179–199 (YGLAAAGTFITLLPLLSLPAL). At 200 to 218 (PPPPQPREHPLKSLLAGFR) the chain is on the cytoplasmic side. The chain crosses the membrane as a helical span at residues 219 to 239 (FLLASPLVGGIALLGGLLTMA). The Periplasmic segment spans residues 240-256 (SAVRVLYPALADNWQMS). Residues 257–277 (AAQIGFLYAAIPLGAAIGALT) form a helical membrane-spanning segment. The Cytoplasmic portion of the chain corresponds to 278 to 287 (SGKLAHSVRP). The chain crosses the membrane as a helical span at residues 288-307 (GLLMLLSTLGAFLAIGLFGL). Residues 308–313 (MPMWIL) lie on the Periplasmic side of the membrane. Residues 314-336 (GVVCLALFGWLSAVSSLLQYTML) form a helical membrane-spanning segment. Residues 337–356 (QTQTPEAMLGRINGLWTAQN) lie on the Cytoplasmic side of the membrane. Residues 357–377 (VTGDAIGAALLGGLGAMMTPV) traverse the membrane as a helical segment. Position 378 (Ala378) is a topological domain, periplasmic. Residues 379 to 399 (SASASGFGLLIIGVLLLLVLV) traverse the membrane as a helical segment. Residues 400 to 416 (ELRRFRQTPPQVTASDS) lie on the Cytoplasmic side of the membrane.

It belongs to the major facilitator superfamily. EntS (TC 2.A.1.38) family.

The protein resides in the cell inner membrane. Its function is as follows. Component of an export pathway for enterobactin. The polypeptide is Enterobactin exporter EntS (Escherichia coli O6:H1 (strain CFT073 / ATCC 700928 / UPEC)).